A 262-amino-acid polypeptide reads, in one-letter code: Adenosylcobinamide-GDP ribazoletransferase (262 aa).

6 consecutive transmembrane segments (helical) span residues 43–63 (YFGLVGLLVGLLSAIVFWLTQ), 66–86 (LPAGVSVLLAMLVGVLLTGGF), 120–140 (GALALMLALLLKWQLLVELAL), 146–166 (AGSALIVAHTVSRVVSASIIF), 191–211 (LLILIASGVLVLLFLKGLAAL), and 242–262 (AAQQIAEIVCYFVLLVVGNIL).

Belongs to the CobS family. Mg(2+) serves as cofactor.

The protein localises to the cell inner membrane. It carries out the reaction alpha-ribazole + adenosylcob(III)inamide-GDP = adenosylcob(III)alamin + GMP + H(+). It catalyses the reaction alpha-ribazole 5'-phosphate + adenosylcob(III)inamide-GDP = adenosylcob(III)alamin 5'-phosphate + GMP + H(+). The protein operates within cofactor biosynthesis; adenosylcobalamin biosynthesis; adenosylcobalamin from cob(II)yrinate a,c-diamide: step 7/7. Its function is as follows. Joins adenosylcobinamide-GDP and alpha-ribazole to generate adenosylcobalamin (Ado-cobalamin). Also synthesizes adenosylcobalamin 5'-phosphate from adenosylcobinamide-GDP and alpha-ribazole 5'-phosphate. The chain is Adenosylcobinamide-GDP ribazoletransferase from Shewanella baltica (strain OS195).